A 23-amino-acid chain; its full sequence is Protein male-specific 40 (23 aa).

As to expression, during early embryogenesis expression is initially detected at the early cleavage stages in the nucleus of two discrete cells. Subsequently, expression is abundant in the cytoplasm of the newly formed pole cells. Male-specific expression during the third larval instar.

The protein resides in the cytoplasm. It localises to the nucleus. This is Protein male-specific 40 from Drosophila melanogaster (Fruit fly).